A 100-amino-acid polypeptide reads, in one-letter code: Large ribosomal subunit protein uL23 (100 aa).

The protein belongs to the universal ribosomal protein uL23 family. As to quaternary structure, part of the 50S ribosomal subunit. Contacts protein L29, and trigger factor when it is bound to the ribosome.

Functionally, one of the early assembly proteins it binds 23S rRNA. One of the proteins that surrounds the polypeptide exit tunnel on the outside of the ribosome. Forms the main docking site for trigger factor binding to the ribosome. This chain is Large ribosomal subunit protein uL23, found in Rippkaea orientalis (strain PCC 8801 / RF-1) (Cyanothece sp. (strain PCC 8801)).